Consider the following 70-residue polypeptide: Flexible pilin (70 aa).

A signal peptide spans 1–24 (MPNFFRNGCIALVGSVAAMGAAHA).

As to quaternary structure, homomer.

It is found in the fimbrium. Functionally, fimbriae (also called pili) are polar filaments radiating from the surface of the bacterium to a length of 0.5-1.5 micrometers and numbering 100-300 per cell. They enable bacteria to colonize the epithelium of specific host organs. Flexible pili possess hemagglutinating function. The polypeptide is Flexible pilin (aerA) (Aeromonas hydrophila).